A 198-amino-acid polypeptide reads, in one-letter code: Cyclin-dependent kinase inhibitor 1B (198 aa).

Polar residues predominate over residues 1 to 11 (MSNVRVSNGSP). Positions 1-22 (MSNVRVSNGSPSLERMDARQAE) are disordered. Phosphoserine; by UHMK1 is present on S10. Residues 51-91 (DMEEASQRKWNFDFQNHKPLEGKYEWQEVEKGSLPEFYYRP) are interaction with CDK2. Y74 bears the Phosphotyrosine; by SRC mark. Residues 87 to 198 (FYYRPPRPPK…KKPGLRRRQT (112 aa)) are disordered. At Y88 the chain carries Phosphotyrosine; by ABL, LYN and SRC. Y89 carries the post-translational modification Phosphotyrosine. The segment covering 104–113 (QESQDVSGNR) has biased composition (polar residues). Positions 126–137 (EDTHLVDQKTDT) are enriched in basic and acidic residues. The short motif at 153–169 (KRPATDDSSPQNKRANR) is the Nuclear localization signal element. At T157 the chain carries Phosphothreonine; by CaMK1, PKB/AKT1 and PIM1. T170 is modified (phosphothreonine). The segment covering 175-186 (SDGSPNAGSVEQ) has biased composition (polar residues). T187 is modified (phosphothreonine; by PKB/AKT1, CDK1 and CDK2). T198 carries the post-translational modification Phosphothreonine; by CaMK1, PKB/AKT1, RPS6KA1, RPS6KA3 and PIM1.

Belongs to the CDI family. In terms of assembly, forms a ternary complex composed of CCNE1, CDK2 and CDKN1B. Interacts directly with CCNE1; the interaction is inhibited by CDK2-dependent phosphorylation on Thr-187. Interacts with COPS5, subunit of the COP9 signalosome complex; the interaction leads to CDKN1B degradation. Interacts with NUP50; the interaction leads to nuclear import and degradation of phosphorylated CDKN1B. Interacts with CCND1 and SNX6. Interacts (Thr-198-phosphorylated form) with 14-3-3 proteins, binds strongly YWHAQ, weakly YWHAE and YWHAH, but not YWHAB nor YWHAZ; the interaction with YWHAQ results in translocation to the cytoplasm. Interacts with AKT1 and LYN; the interactions lead to cytoplasmic mislocation, phosphorylation of CDKN1B and inhibition of cell cycle arrest. Forms a ternary complex with CCNA2 and CDK2; CDKN1B inhibits the kinase activity of CDK2 through conformational rearrangements. Interacts (unphosphorylated form) with CDK2. Forms a complex with CDK2 and SPDYA, but does not directly interact with SPDYA. Forms a ternary complex composed of cyclin D, CDK4 and CDKN1B. Interacts (phosphorylated on Tyr-88 and Tyr-89) with CDK4; the interaction is required for cyclin D and CDK4 complex assembly, induces nuclear translocation and activates the CDK4 kinase activity. Interacts with GRB2. Interacts with PIM1. Identified in a complex with SKP1, SKP2 and CKS1B. Interacts with UHMK1; the interaction leads to cytoplasmic mislocation, phosphorylation of CDKN1B and inhibition of cell cycle arrest. Also interacts with CDK1. Dephosphorylated on Thr-187 by PPM1H, leading to CDKN1B stability. Post-translationally, phosphorylated; phosphorylation occurs on serine, threonine and tyrosine residues. Phosphorylation on Ser-10 is the major site of phosphorylation in resting cells, takes place at the G(0)-G(1) phase and leads to protein stability. Phosphorylation on other sites is greatly enhanced by mitogens, growth factors, cMYC and in certain cancer cell lines. The phosphorylated form found in the cytoplasm is inactivate. Phosphorylation on Thr-198 is required for interaction with 14-3-3 proteins. Phosphorylation on Thr-187, by CDK1 and CDK2 leads to protein ubiquitination and proteasomal degradation. Tyrosine phosphorylation promotes this process. Phosphorylation by PKB/AKT1 can be suppressed by LY294002, an inhibitor of the catalytic subunit of PI3K. Phosphorylation on Tyr-88 and Tyr-89 has no effect on binding CDK2, but is required for binding CDK4. Dephosphorylated on tyrosine residues by G-CSF. Dephosphorylated on Thr-187 by PPM1H, leading to CDKN1B stability. In terms of processing, ubiquitinated; in the cytoplasm by the KPC complex (composed of RNF123/KPC1 and UBAC1/KPC2) and, in the nucleus, by SCF(SKP2). The latter requires prior phosphorylation on Thr-187. Ubiquitinated; by a TRIM21-containing SCF(SKP2)-like complex; leads to its degradation. Subject to degradation in the lysosome. Interaction with SNX6 promotes lysosomal degradation.

It is found in the nucleus. It localises to the cytoplasm. Its subcellular location is the endosome. Its function is as follows. Important regulator of cell cycle progression. Inhibits the kinase activity of CDK2 bound to cyclin A, but has little inhibitory activity on CDK2 bound to SPDYA. Involved in G1 arrest. Potent inhibitor of cyclin E- and cyclin A-CDK2 complexes. Forms a complex with cyclin type D-CDK4 complexes and is involved in the assembly, stability, and modulation of CCND1-CDK4 complex activation. Acts either as an inhibitor or an activator of cyclin type D-CDK4 complexes depending on its phosphorylation state and/or stoichometry. The sequence is that of Cyclin-dependent kinase inhibitor 1B (CDKN1B) from Felis catus (Cat).